The chain runs to 1298 residues: Phosphoribosylformylglycinamidine synthase (1298 aa).

The interval 301 to 328 (APFPGASTGSGGEIRDEGATGRGAKPKA) is disordered. Residues 305-316 (GASTGSGGEIRD), 384-386 (TGY), and alanine 676 each bind ATP. Mg(2+) contacts are provided by aspartate 677, glutamate 716, asparagine 720, and aspartate 884. An ATP-binding site is contributed by serine 886. In terms of domain architecture, Glutamine amidotransferase type-1 spans 1045–1298 (VAVLREQGVN…MFRNARVWVN (254 aa)). Cysteine 1138 serves as the catalytic Nucleophile. Residues histidine 1263 and glutamate 1265 contribute to the active site.

This sequence in the N-terminal section; belongs to the FGAMS family. Monomer.

It localises to the cytoplasm. The enzyme catalyses N(2)-formyl-N(1)-(5-phospho-beta-D-ribosyl)glycinamide + L-glutamine + ATP + H2O = 2-formamido-N(1)-(5-O-phospho-beta-D-ribosyl)acetamidine + L-glutamate + ADP + phosphate + H(+). It functions in the pathway purine metabolism; IMP biosynthesis via de novo pathway; 5-amino-1-(5-phospho-D-ribosyl)imidazole from N(2)-formyl-N(1)-(5-phospho-D-ribosyl)glycinamide: step 1/2. Phosphoribosylformylglycinamidine synthase involved in the purines biosynthetic pathway. Catalyzes the ATP-dependent conversion of formylglycinamide ribonucleotide (FGAR) and glutamine to yield formylglycinamidine ribonucleotide (FGAM) and glutamate. The protein is Phosphoribosylformylglycinamidine synthase of Pseudomonas fluorescens (strain Pf0-1).